The following is a 181-amino-acid chain: Oligoribonuclease (181 aa).

The region spanning 8–171 is the Exonuclease domain; sequence LIWLDLEMTG…DDIKESIAEL (164 aa). Tyr129 is a catalytic residue.

The protein belongs to the oligoribonuclease family.

The protein localises to the cytoplasm. In terms of biological role, 3'-to-5' exoribonuclease specific for small oligoribonucleotides. This chain is Oligoribonuclease, found in Colwellia psychrerythraea (strain 34H / ATCC BAA-681) (Vibrio psychroerythus).